We begin with the raw amino-acid sequence, 479 residues long: MNIETLFPLDPNVKVRTRFAPSPTGYLHVGGARTALSSWLYAKHFNGEFVLRIEDTDLERSTPEATAAILEGMEWLNLAWEHGPYYQTKRFDRYNQVIDQMIEQGLAYRCYCSKERLENLRHEQEANKEKPRYDRHCLAHHDQPTDAPHVVRFKNPQEGSVVFDDAVRGRIEISNSELDDLIIRRTDGSPTYNFCVVVDDWDMGITHVVRGEDHINNTPRQINILKALGAPIPTYAHVSMINGDDGQKLSKRHGAVSVMQYRDDGYLPEALINYLVRLGWGHGDQEIFSREEMIELFDIHSVSKSASAFNTDKLQWLNQHYMRSLPAEHVAKYLAWHMNDQAIDTSSGPALEEIIPVLSERAKTLKELAAASRYFYQEFDGYDEKAAAKNFKAEAVAPLAKLLEKLTALTDWSVEAIHDAMNATAADLEIGMGKVGMPFRLAVTGSGQSPSMDITAKLVGRERTLARIQKAIEFIQAQA.

Positions 21-31 (PSPTGYLHVGG) match the 'HIGH' region motif. The 'KMSKS' region signature appears at 248–252 (KLSKR). Lysine 251 is a binding site for ATP.

This sequence belongs to the class-I aminoacyl-tRNA synthetase family. Glutamate--tRNA ligase type 1 subfamily. As to quaternary structure, monomer.

The protein localises to the cytoplasm. The catalysed reaction is tRNA(Glu) + L-glutamate + ATP = L-glutamyl-tRNA(Glu) + AMP + diphosphate. In terms of biological role, catalyzes the attachment of glutamate to tRNA(Glu) in a two-step reaction: glutamate is first activated by ATP to form Glu-AMP and then transferred to the acceptor end of tRNA(Glu). The chain is Glutamate--tRNA ligase from Actinobacillus pleuropneumoniae serotype 5b (strain L20).